The following is a 389-amino-acid chain: (S)-8-oxocitronellyl enol synthase CYC1 (389 aa).

NADP(+) contacts are provided by residues 34–36 (TGI), 62–63 (RR), 80–81 (DV), 104–105 (AW), and Gln138. Residues Lys142 and Tyr174 contribute to the active site. Positions 142 and 174 each coordinate substrate. Residues Tyr174, Val201, and 208-210 (SMM) each bind NADP(+). A substrate-binding site is contributed by Ser350.

Belongs to the short-chain dehydrogenases/reductases (SDR) family. Highly divergent.

The catalysed reaction is (S)-8-oxocitronellyl enol + NADP(+) = (6E)-8-oxogeranial + NADPH + H(+). The enzyme catalyses (S)-8-oxocitronellyl enol + NAD(+) = (6E)-8-oxogeranial + NADH + H(+). Functionally, iridoid synthase that catalyzes the first step in generation of the iridoid ring scaffold using the linear monoterpene (6E)-8-oxogeranial as substrate. Iridoids comprise a large family of distinctive bicyclic monoterpenes that possess a wide range of pharmacological activities, including anticancer, anti-inflammatory, antifungal and antibacterial activities. This chain is (S)-8-oxocitronellyl enol synthase CYC1, found in Camptotheca acuminata (Happy tree).